The sequence spans 279 residues: Probable endonuclease 4 (279 aa).

Residues H69, H109, E145, D179, H182, H216, D229, H231, and E261 each coordinate Zn(2+).

It belongs to the AP endonuclease 2 family. The cofactor is Zn(2+).

It catalyses the reaction Endonucleolytic cleavage to 5'-phosphooligonucleotide end-products.. In terms of biological role, endonuclease IV plays a role in DNA repair. It cleaves phosphodiester bonds at apurinic or apyrimidinic (AP) sites, generating a 3'-hydroxyl group and a 5'-terminal sugar phosphate. In Chlorobium luteolum (strain DSM 273 / BCRC 81028 / 2530) (Pelodictyon luteolum), this protein is Probable endonuclease 4.